A 219-amino-acid chain; its full sequence is Ribonuclease T (219 aa).

The Exonuclease domain occupies 20–194; that stretch reads VVIDIETAGF…YDSLQTANLF (175 aa). Mg(2+) is bound by residues D23, E25, H181, and D186. H181 serves as the catalytic Proton donor/acceptor.

Belongs to the RNase T family. In terms of assembly, homodimer. Mg(2+) serves as cofactor.

Trims short 3' overhangs of a variety of RNA species, leaving a one or two nucleotide 3' overhang. Responsible for the end-turnover of tRNA: specifically removes the terminal AMP residue from uncharged tRNA (tRNA-C-C-A). Also appears to be involved in tRNA biosynthesis. This chain is Ribonuclease T, found in Buchnera aphidicola subsp. Schizaphis graminum (strain Sg).